The sequence spans 642 residues: Threonine--tRNA ligase (642 aa).

The TGS domain maps to 1-61 (MPVITLPDGS…ESDAQLAIIT (61 aa)). The tract at residues 243–534 (DHRKIGKQLD…LTEEYAGFYP (292 aa)) is catalytic. Cys-334, His-385, and His-511 together coordinate Zn(2+).

Belongs to the class-II aminoacyl-tRNA synthetase family. Homodimer. The cofactor is Zn(2+).

It is found in the cytoplasm. The catalysed reaction is tRNA(Thr) + L-threonine + ATP = L-threonyl-tRNA(Thr) + AMP + diphosphate + H(+). In terms of biological role, catalyzes the attachment of threonine to tRNA(Thr) in a two-step reaction: L-threonine is first activated by ATP to form Thr-AMP and then transferred to the acceptor end of tRNA(Thr). Also edits incorrectly charged L-seryl-tRNA(Thr). This Serratia proteamaculans (strain 568) protein is Threonine--tRNA ligase.